We begin with the raw amino-acid sequence, 1022 residues long: Leucine--tRNA ligase (1022 aa).

The 'HIGH' region motif lies at 47 to 57; that stretch reads PYPNSPMHLGH. Residues 697–701 carry the 'KMSKS' region motif; that stretch reads KMSKS. Position 700 (lysine 700) interacts with ATP.

It belongs to the class-I aminoacyl-tRNA synthetase family.

Its subcellular location is the cytoplasm. It catalyses the reaction tRNA(Leu) + L-leucine + ATP = L-leucyl-tRNA(Leu) + AMP + diphosphate. The polypeptide is Leucine--tRNA ligase (Ignicoccus hospitalis (strain KIN4/I / DSM 18386 / JCM 14125)).